The chain runs to 680 residues: Cytosolic endo-beta-N-acetylglucosaminidase 1 (680 aa).

A compositionally biased stretch (pro residues) spans 1-15 (MSVAPPAPSPPPFDP). The segment at 1 to 21 (MSVAPPAPSPPPFDPTKPSTP) is disordered.

It belongs to the glycosyl hydrolase 85 family.

It is found in the cytoplasm. The protein localises to the cytosol. It catalyses the reaction an N(4)-(oligosaccharide-(1-&gt;3)-[oligosaccharide-(1-&gt;6)]-beta-D-Man-(1-&gt;4)-beta-D-GlcNAc-(1-&gt;4)-alpha-D-GlcNAc)-L-asparaginyl-[protein] + H2O = an oligosaccharide-(1-&gt;3)-[oligosaccharide-(1-&gt;6)]-beta-D-Man-(1-&gt;4)-D-GlcNAc + N(4)-(N-acetyl-beta-D-glucosaminyl)-L-asparaginyl-[protein]. Its function is as follows. Endoglycosidase that releases N-glycans from glycoproteins by cleaving the beta-1,4-glycosidic bond in the N,N'-diacetylchitobiose core. Involved in the production of high-mannose type N-glycans during plant development and fruit maturation. The sequence is that of Cytosolic endo-beta-N-acetylglucosaminidase 1 from Arabidopsis thaliana (Mouse-ear cress).